Reading from the N-terminus, the 220-residue chain is Large ribosomal subunit protein uL3 (220 aa).

The tract at residues 132-153 (SGRASHGNSRSHNVPGSIGMAQ) is disordered. Polar residues predominate over residues 133 to 145 (GRASHGNSRSHNV). An N5-methylglutamine modification is found at Q153.

It belongs to the universal ribosomal protein uL3 family. As to quaternary structure, part of the 50S ribosomal subunit. Forms a cluster with proteins L14 and L19. Post-translationally, methylated by PrmB.

Its function is as follows. One of the primary rRNA binding proteins, it binds directly near the 3'-end of the 23S rRNA, where it nucleates assembly of the 50S subunit. This Ralstonia nicotianae (strain ATCC BAA-1114 / GMI1000) (Ralstonia solanacearum) protein is Large ribosomal subunit protein uL3.